An 840-amino-acid polypeptide reads, in one-letter code: Probable alpha-glucuronidase A (840 aa).

An N-terminal signal peptide occupies residues 1–19 (MWSGIPIFALLSSIGIAAA). 13 N-linked (GlcNAc...) asparagine glycosylation sites follow: N50, N149, N222, N262, N279, N310, N465, N527, N576, N610, N682, N723, and N732.

This sequence belongs to the glycosyl hydrolase 67 family.

It is found in the secreted. The catalysed reaction is an alpha-D-glucuronoside + H2O = D-glucuronate + an alcohol. Its function is as follows. Alpha-glucuronidase involved in the hydrolysis of xylan, a major structural heterogeneous polysaccharide found in plant biomass representing the second most abundant polysaccharide in the biosphere, after cellulose. Releases 4-O-methylglucuronic acid from xylan. The sequence is that of Probable alpha-glucuronidase A (aguA) from Aspergillus fumigatus (strain ATCC MYA-4609 / CBS 101355 / FGSC A1100 / Af293) (Neosartorya fumigata).